Here is a 427-residue protein sequence, read N- to C-terminus: UDP-N-acetyl-D-mannosamine dehydrogenase (427 aa).

Tyr19, Ile20, Asp39, Arg44, Thr91, and Thr130 together coordinate NAD(+). The UDP-N-acetyl-alpha-D-mannosaminouronate site is built by Arg155, Val156, Lys207, Asn211, Arg214, His245, Arg247, and Gly258. Lys207 (proton donor/acceptor) is an active-site residue. Cys261 acts as the Nucleophile in catalysis. UDP-N-acetyl-alpha-D-mannosaminouronate contacts are provided by Tyr318 and Lys319. Arg326 is an NAD(+) binding site. Lys404 provides a ligand contact to UDP-N-acetyl-alpha-D-mannosaminouronate.

The protein belongs to the UDP-glucose/GDP-mannose dehydrogenase family. In terms of assembly, homotetramer; probably dimer of dimers.

The catalysed reaction is UDP-N-acetyl-alpha-D-mannosamine + 2 NAD(+) + H2O = UDP-N-acetyl-alpha-D-mannosaminouronate + 2 NADH + 3 H(+). In terms of biological role, catalyzes the four-electron oxidation of UDP-N-acetyl-D-mannosamine (UDP-ManNAc), reducing NAD(+) and releasing UDP-N-acetylmannosaminuronic acid (UDP-ManNAcA). The chain is UDP-N-acetyl-D-mannosamine dehydrogenase (wecC) from Methanococcus vannielii (strain ATCC 35089 / DSM 1224 / JCM 13029 / OCM 148 / SB).